An 865-amino-acid chain; its full sequence is Leucine--tRNA ligase (865 aa).

Positions 48-58 (PYPSGQLHVGH) match the 'HIGH' region motif. The 'KMSKS' region motif lies at 626–630 (KMSKS). Lys-629 is an ATP binding site.

It belongs to the class-I aminoacyl-tRNA synthetase family.

Its subcellular location is the cytoplasm. It catalyses the reaction tRNA(Leu) + L-leucine + ATP = L-leucyl-tRNA(Leu) + AMP + diphosphate. This Gluconobacter oxydans (strain 621H) (Gluconobacter suboxydans) protein is Leucine--tRNA ligase.